We begin with the raw amino-acid sequence, 2212 residues long: Voltage-dependent P/Q-type calcium channel subunit alpha-1A (2212 aa).

At 1–100 (MARFGDEMPG…KYAKKITEWP (100 aa)) the chain is on the cytoplasmic side. One copy of the I repeat lies at 87 to 365 (NVVRKYAKKI…LVLGVLSGEF (279 aa)). The helical transmembrane segment at 101-119 (PFEYMILATIIANCIVLAL) threads the bilayer. At 120–138 (EQHLPDDDKTPMSERLDDT) the chain is on the extracellular side. A helical transmembrane segment spans residues 139–156 (EPYFIGIFCFEAGIKIVA). At 157–168 (LGFAFHKGSYLR) the chain is on the cytoplasmic side. Residues 169-184 (NGWNVMDFVVVLTGIL) form a helical membrane-spanning segment. The Extracellular segment spans residues 185–192 (ATVGTEFD). Residues 193–211 (LRTLRAVRVLRPLKLVSGI) form a helical membrane-spanning segment. Residues 212 to 230 (PSLQVVLKSIMKAMIPLLQ) lie on the Cytoplasmic side of the membrane. Residues 231 to 250 (IGLLLFFAILIFAIIGLEFY) form a helical membrane-spanning segment. The Extracellular portion of the chain corresponds to 251–337 (MGKFHTTCFE…NSNDASGNTW (87 aa)). The N-linked (GlcNAc...) asparagine glycan is linked to asparagine 285. Ca(2+) is bound at residue glutamate 320. The chain crosses the membrane as a helical span at residues 338 to 362 (NWLYFIPLIIIGSFFMLNLVLGVLS). The Cytoplasmic segment spans residues 363–489 (GEFAKERERV…FYIRRMVKTQ (127 aa)). The binding to the beta subunit stretch occupies residues 385–402 (QQIERELNGYMEWISKAE). Threonine 411 is modified (phosphothreonine). A phosphoserine mark is found at serine 450 and serine 453. One copy of the II repeat lies at 475–719 (ERRMRFYIRR…VFLAIAVDNL (245 aa)). The chain crosses the membrane as a helical span at residues 490–509 (AFYWTVLSLVALNTLWLAIV). The Extracellular portion of the chain corresponds to 510 to 523 (HYNQPEWLSDFLYY). Residues 524-543 (AEFIFLGLFMSEMFIKMYGL) traverse the membrane as a helical segment. Over 544–551 (GTRPYFHS) the chain is Cytoplasmic. A helical membrane pass occupies residues 552–570 (SFNCFDCGVIIGSIFEVIW). The Extracellular segment spans residues 571–580 (AVIKPGTSFG). The chain crosses the membrane as a helical span at residues 581–599 (ISVLRALRLLRIFKVTKYW). Residues 600-618 (ASLRNLVVSLLNSMKSIIS) lie on the Cytoplasmic side of the membrane. The helical transmembrane segment at 619 to 638 (LLFLLFLFIVVFALLGMQLF) threads the bilayer. The Extracellular segment spans residues 639–691 (GGQFNFDEGTPPTNFDTFPAAIMTVFQILTGEDWNEVMYDEIKSQGGVQGGMV). Glutamate 670 contributes to the Ca(2+) binding site. A helical transmembrane segment spans residues 692-716 (FSIYFIVLTLFGNYTLLNVFLAIAV). Residues 717–1190 (DNLANAQELT…TNPLRRLCHY (474 aa)) lie on the Cytoplasmic side of the membrane. Serine 752, serine 755, and serine 792 each carry phosphoserine. Basic and acidic residues-rich tracts occupy residues 814 to 824 (PDVKTHLDRPL), 850 to 862 (RPRE…DARR), 871 to 924 (APGR…EGEP), and 932 to 958 (RPGD…RAAD). 2 disordered regions span residues 814–1117 (PDVK…RKPE) and 1137–1170 (VNKN…KPMP). A phosphoserine mark is found at serine 1038, serine 1042, and serine 1051. A compositionally biased stretch (polar residues) spans 1056 to 1073 (GNSTNPGPALATNPQNAA). A compositionally biased stretch (low complexity) spans 1074–1083 (SRRTPNNPGN). The span at 1094–1111 (ENSLIVTNPSSTQPNSAK) shows a compositional bias: polar residues. Residues 1153 to 1163 (KKEEEEADPGE) are compositionally biased toward acidic residues. An III repeat occupies 1182-1465 (NPLRRLCHYI…IFVALIIITF (284 aa)). Residues 1191–1214 (ILNLRYFEMCILMVIAMSSIALAA) traverse the membrane as a helical segment. Topologically, residues 1215 to 1231 (EDPVQPNAPRNNVLRYF) are extracellular. Residues 1232 to 1251 (DYVFTGVFTFEMVIKMIDLG) form a helical membrane-spanning segment. Over 1252 to 1258 (LVLHQGA) the chain is Cytoplasmic. A helical membrane pass occupies residues 1259 to 1282 (YFRDLWNILDFIVVSGALVAFAFT). The Extracellular portion of the chain corresponds to 1283–1293 (GNSKGKDINTI). The chain crosses the membrane as a helical span at residues 1294–1311 (KSLRVLRVLRPLKTIKRL). Over 1312-1330 (PKLKAVFDCVVNSLKNVFN) the chain is Cytoplasmic. A helical transmembrane segment spans residues 1331-1350 (ILIVYMLFMFIFAVVAVQLF). Over 1351–1437 (KGKFFHCTDE…QGPSPGYRME (87 aa)) the chain is Extracellular. Residue glutamate 1411 participates in Ca(2+) binding. A helical membrane pass occupies residues 1438–1462 (MSIFYVVYFVVFPFFFVNIFVALII). The Cytoplasmic segment spans residues 1463–1518 (ITFQEQGDKMMEEYSLEKNERACIDFAISAKPLTRHMPQNKQSFQYRMWQFVVSPP). The IV repeat unit spans residues 1502 to 1765 (NKQSFQYRMW…LFVAVIMDNF (264 aa)). A helical transmembrane segment spans residues 1519 to 1537 (FEYTIMAMIALNTIVLMMK). Topologically, residues 1538 to 1551 (FYGASVAYENALRV) are extracellular. Residues 1552-1573 (FNIVFTSLFSLECVLKVMAFGI) traverse the membrane as a helical segment. At 1574 to 1580 (LNYFRDA) the chain is on the cytoplasmic side. Residues 1581 to 1600 (WNIFDFVTVLGSITDILVTE) form a helical membrane-spanning segment. Over 1601–1607 (FGNNFIN) the chain is Extracellular. Residue asparagine 1607 is glycosylated (N-linked (GlcNAc...) asparagine). The helical transmembrane segment at 1608–1626 (LSFLRLFRAARLIKLLRQG) threads the bilayer. Over 1627–1645 (YTIRILLWTFVQSFKALPY) the chain is Cytoplasmic. A helical membrane pass occupies residues 1646–1665 (VCLLIAMLFFIYAIIGMQVF). The Extracellular segment spans residues 1666-1737 (GNIGIDGEDE…IQKPECGNEF (72 aa)). The chain crosses the membrane as a helical span at residues 1738–1763 (AYFYFVSFIFLCSFLMLNLFVAVIMD). Topologically, residues 1764–2212 (NFEYLTRDSS…EGREHATHRQ (449 aa)) are cytoplasmic. At threonine 1935 the chain carries Phosphothreonine. The segment at 1940–2212 (QRMEPPSPTQ…EGREHATHRQ (273 aa)) is disordered. 2 stretches are compositionally biased toward polar residues: residues 1948–1963 (TQEG…STQL) and 1972–1997 (QESS…TGTW). 6 positions are modified to phosphoserine: serine 1998, serine 2016, serine 2028, serine 2030, serine 2071, and serine 2091. A compositionally biased stretch (polar residues) spans 2008 to 2017 (PNSQPNSQSV). Residues 2018 to 2034 (EMREMGTDGYSDSEHYL) are compositionally biased toward basic and acidic residues. A compositionally biased stretch (polar residues) spans 2064 to 2073 (LSTISDTSPM). Composition is skewed to basic and acidic residues over residues 2085 to 2102 (RRLD…ENQR) and 2143 to 2153 (PSKDRDQDRGR). Basic residues predominate over residues 2154–2172 (PKDRKHRPHHHHHHHHHHP). Over residues 2173–2212 (PAPDRERYAQERPDTGRARAREQRWSRSPSEGREHATHRQ) the composition is skewed to basic and acidic residues.

It belongs to the calcium channel alpha-1 subunit (TC 1.A.1.11) family. CACNA1A subfamily. As to quaternary structure, voltage-dependent calcium channels are multisubunit complexes, consisting of alpha-1, alpha-2, beta and delta subunits in a 1:1:1:1 ratio. The channel activity is directed by the pore-forming and voltage-sensitive alpha-1 subunit. In many cases, this subunit is sufficient to generate voltage-sensitive calcium channel activity. The auxiliary subunits beta and alpha-2/delta linked by a disulfide bridge regulate the channel activity. Interacts (via C-terminal CDB motif) with CABP1 in the pre- and postsynaptic membranes. Interacts with the spider omega-agatoxin-IVA (AC P30288). Interacts with TSPOAP1. Brain specific. Purkinje cells contain predominantly P-type VSCC, the Q-type being a prominent calcium current in cerebellar granule cells. Also found in heart, in kidney distal convoluted tubule (DCT), and in pituitary.

Its subcellular location is the cell membrane. It catalyses the reaction Ca(2+)(in) = Ca(2+)(out). Voltage-sensitive calcium channels (VSCC) mediate the entry of calcium ions into excitable cells and are also involved in a variety of calcium-dependent processes, including muscle contraction, hormone or neurotransmitter release, gene expression, cell motility, cell division and cell death. The isoform alpha-1A gives rise to P and/or Q-type calcium currents. P/Q-type calcium channels belong to the 'high-voltage activated' (HVA) group and are specifically blocked by the spider omega-agatoxin-IVA (AC P30288). They are however insensitive to dihydropyridines (DHP). This is Voltage-dependent P/Q-type calcium channel subunit alpha-1A from Rattus norvegicus (Rat).